The chain runs to 461 residues: Porin AaxA (461 aa).

Positions 1-22 are cleaved as a signal peptide; it reads MSFRSVLLTALLSLSFTTTMQA.

Belongs to the OprB family.

It localises to the cell outer membrane. In terms of biological role, facilitates L-arginine uptake, as part of the AaxABC system. The arginine uptake by the bacterium in the macrophage may be a virulence factor against the host innate immune response. The protein is Porin AaxA (aaxA) of Chlamydia trachomatis serovar A (strain ATCC VR-571B / DSM 19440 / HAR-13).